Consider the following 1178-residue polypeptide: DNA-directed RNA polymerase subunit beta' (1178 aa).

Residues Cys-60, Cys-62, Cys-75, and Cys-78 each contribute to the Zn(2+) site. Mg(2+)-binding residues include Asp-450, Asp-452, and Asp-454. Residues Cys-795, Cys-869, Cys-876, and Cys-879 each contribute to the Zn(2+) site.

This sequence belongs to the RNA polymerase beta' chain family. In terms of assembly, the RNAP catalytic core consists of 2 alpha, 1 beta, 1 beta' and 1 omega subunit. When a sigma factor is associated with the core the holoenzyme is formed, which can initiate transcription. Requires Mg(2+) as cofactor. The cofactor is Zn(2+).

The enzyme catalyses RNA(n) + a ribonucleoside 5'-triphosphate = RNA(n+1) + diphosphate. Its function is as follows. DNA-dependent RNA polymerase catalyzes the transcription of DNA into RNA using the four ribonucleoside triphosphates as substrates. This is DNA-directed RNA polymerase subunit beta' from Clostridium perfringens (strain ATCC 13124 / DSM 756 / JCM 1290 / NCIMB 6125 / NCTC 8237 / Type A).